A 431-amino-acid polypeptide reads, in one-letter code: Ribosomal RNA small subunit methyltransferase B (431 aa).

S-adenosyl-L-methionine-binding positions include 254–260 (CAAPGGK), Asp277, Asp303, and Asp322. Cys375 functions as the Nucleophile in the catalytic mechanism.

Belongs to the class I-like SAM-binding methyltransferase superfamily. RsmB/NOP family.

The protein localises to the cytoplasm. It catalyses the reaction cytidine(967) in 16S rRNA + S-adenosyl-L-methionine = 5-methylcytidine(967) in 16S rRNA + S-adenosyl-L-homocysteine + H(+). Specifically methylates the cytosine at position 967 (m5C967) of 16S rRNA. The sequence is that of Ribosomal RNA small subunit methyltransferase B from Klebsiella pneumoniae subsp. pneumoniae (strain ATCC 700721 / MGH 78578).